The primary structure comprises 77 residues: Sec-independent protein translocase protein TatA (77 aa).

Residues methionine 1–glycine 21 form a helical membrane-spanning segment. The segment at lysine 41–arginine 77 is disordered. The segment covering alanine 66–arginine 77 has biased composition (polar residues).

The protein belongs to the TatA/E family. In terms of assembly, the Tat system comprises two distinct complexes: a TatABC complex, containing multiple copies of TatA, TatB and TatC subunits, and a separate TatA complex, containing only TatA subunits. Substrates initially bind to the TatABC complex, which probably triggers association of the separate TatA complex to form the active translocon.

The protein localises to the cell inner membrane. Functionally, part of the twin-arginine translocation (Tat) system that transports large folded proteins containing a characteristic twin-arginine motif in their signal peptide across membranes. TatA could form the protein-conducting channel of the Tat system. This chain is Sec-independent protein translocase protein TatA, found in Sphingopyxis alaskensis (strain DSM 13593 / LMG 18877 / RB2256) (Sphingomonas alaskensis).